A 233-amino-acid chain; its full sequence is 7-cyano-7-deazaguanine synthase (233 aa).

Position 11-21 (11-21 (FSGGQDSTTCL)) interacts with ATP. Cys-199, Cys-214, Cys-217, and Cys-220 together coordinate Zn(2+).

The protein belongs to the QueC family. Zn(2+) is required as a cofactor.

It carries out the reaction 7-carboxy-7-deazaguanine + NH4(+) + ATP = 7-cyano-7-deazaguanine + ADP + phosphate + H2O + H(+). It functions in the pathway purine metabolism; 7-cyano-7-deazaguanine biosynthesis. Catalyzes the ATP-dependent conversion of 7-carboxy-7-deazaguanine (CDG) to 7-cyano-7-deazaguanine (preQ(0)). This is 7-cyano-7-deazaguanine synthase from Herminiimonas arsenicoxydans.